Here is a 388-residue protein sequence, read N- to C-terminus: 3-ketoacyl-CoA thiolase (388 aa).

Residue C91 is the Acyl-thioester intermediate of the active site. Residues H343 and C373 each act as proton acceptor in the active site.

The protein belongs to the thiolase-like superfamily. Thiolase family. As to quaternary structure, heterotetramer of two alpha chains (FadB) and two beta chains (FadA).

It is found in the cytoplasm. The catalysed reaction is an acyl-CoA + acetyl-CoA = a 3-oxoacyl-CoA + CoA. The protein operates within lipid metabolism; fatty acid beta-oxidation. Functionally, catalyzes the final step of fatty acid oxidation in which acetyl-CoA is released and the CoA ester of a fatty acid two carbons shorter is formed. In Photorhabdus laumondii subsp. laumondii (strain DSM 15139 / CIP 105565 / TT01) (Photorhabdus luminescens subsp. laumondii), this protein is 3-ketoacyl-CoA thiolase.